The chain runs to 1400 residues: DNA-directed RNA polymerase subunit beta' (1400 aa).

The Zn(2+) site is built by Cys71, Cys73, Cys86, and Cys89. 3 residues coordinate Mg(2+): Asp462, Asp464, and Asp466. Zn(2+) is bound by residues Cys811, Cys885, Cys892, and Cys895.

Belongs to the RNA polymerase beta' chain family. In terms of assembly, the RNAP catalytic core consists of 2 alpha, 1 beta, 1 beta' and 1 omega subunit. When a sigma factor is associated with the core the holoenzyme is formed, which can initiate transcription. Mg(2+) serves as cofactor. It depends on Zn(2+) as a cofactor.

It carries out the reaction RNA(n) + a ribonucleoside 5'-triphosphate = RNA(n+1) + diphosphate. DNA-dependent RNA polymerase catalyzes the transcription of DNA into RNA using the four ribonucleoside triphosphates as substrates. The sequence is that of DNA-directed RNA polymerase subunit beta' from Brucella anthropi (strain ATCC 49188 / DSM 6882 / CCUG 24695 / JCM 21032 / LMG 3331 / NBRC 15819 / NCTC 12168 / Alc 37) (Ochrobactrum anthropi).